The primary structure comprises 166 residues: MRKFSTYDLAQISLLACLIIVTGMFKIPTGIPGSEFQLSAPIAVAIAAVFGFKRYFLAGIIASLILFLLGIHSILNVEISIIFRLTVGLIIVLLGTSIPVLVVAGPIGTMVARLGLAFTLGTPFLPLFVLAIPGMVITAVSVYPITKMLYAINKKVAGDHHVRNVL.

5 helical membrane passes run 12–32 (ISLL…TGIP), 33–53 (GSEF…FGFK), 55–75 (YFLA…HSIL), 87–107 (VGLI…AGPI), and 117–137 (AFTL…GMVI).

The protein localises to the cell membrane. Its function is as follows. Does not seem to be a permease of pimelate. Its role in biotin synthesis is not clear. The sequence is that of Protein BioX (bioX) from Lysinibacillus sphaericus (Bacillus sphaericus).